The sequence spans 760 residues: Formate acetyltransferase 1 (760 aa).

The PFL domain maps to 3-625 (ELNEKLATAW…KTGNTPDGRR (623 aa)). At Lys63 the chain carries N6-acetyllysine; alternate. Lys63 carries the N6-succinyllysine; alternate modification. Lys107 is subject to N6-succinyllysine. Position 117 is an N6-acetyllysine; alternate (Lys117). Lys117 bears the N6-succinyllysine; alternate mark. Lys124 is subject to N6-succinyllysine. Lys195 is modified (N6-acetyllysine; alternate). At Lys195 the chain carries N6-succinyllysine; alternate. The active-site S-acetylcysteine intermediate is the Cys419. Residue Cys420 is the Cysteine radical intermediate of the active site. An N6-acetyllysine; alternate modification is found at Lys454. N6-succinyllysine; alternate is present on Lys454. Position 467 is an N6-succinyllysine (Lys467). An N6-acetyllysine mark is found at Lys541 and Lys591. Residues 632 to 760 (PGANPMHGRD…VITRTFTQSM (129 aa)) enclose the Glycine radical domain. Lys654 carries the post-translational modification N6-succinyllysine. Gly735 carries the glycine radical modification.

The protein belongs to the glycyl radical enzyme (GRE) family. PFL subfamily. Homodimer. Interacts specifically with FocA.

Its subcellular location is the cytoplasm. The enzyme catalyses formate + acetyl-CoA = pyruvate + CoA. Its pathway is fermentation; pyruvate fermentation; formate from pyruvate: step 1/1. Its function is as follows. Catalyzes the conversion of pyruvate to formate and acetyl-CoA. In addition, may be involved in the control of the activity of the formate channel FocA, via direct interaction with FocA. The chain is Formate acetyltransferase 1 (pflB) from Escherichia coli (strain K12).